Reading from the N-terminus, the 293-residue chain is GTP cyclohydrolase FolE2 (293 aa).

This sequence belongs to the GTP cyclohydrolase IV family.

The catalysed reaction is GTP + H2O = 7,8-dihydroneopterin 3'-triphosphate + formate + H(+). It participates in cofactor biosynthesis; 7,8-dihydroneopterin triphosphate biosynthesis; 7,8-dihydroneopterin triphosphate from GTP: step 1/1. Converts GTP to 7,8-dihydroneopterin triphosphate. This Pseudomonas entomophila (strain L48) protein is GTP cyclohydrolase FolE2.